A 261-amino-acid polypeptide reads, in one-letter code: Small ribosomal subunit protein uS2 (261 aa).

This sequence belongs to the universal ribosomal protein uS2 family.

This chain is Small ribosomal subunit protein uS2, found in Paracoccus denitrificans (strain Pd 1222).